A 232-amino-acid chain; its full sequence is 26.5 kDa heat shock protein, mitochondrial (232 aa).

Residues methionine 1 to methionine 42 constitute a mitochondrion transit peptide. The tract at residues threonine 44–threonine 82 is disordered. Positions glutamine 49 to serine 64 are enriched in basic and acidic residues. Residues phenylalanine 69–leucine 78 show a composition bias toward basic residues. The sHSP domain maps to isoleucine 114–glutamate 232.

The protein belongs to the small heat shock protein (HSP20) family. In terms of assembly, may form oligomeric structures.

It is found in the mitochondrion. This is 26.5 kDa heat shock protein, mitochondrial (HSP26.5) from Arabidopsis thaliana (Mouse-ear cress).